Reading from the N-terminus, the 97-residue chain is Large ribosomal subunit protein uL23 (97 aa).

It belongs to the universal ribosomal protein uL23 family. As to quaternary structure, part of the 50S ribosomal subunit. Contacts protein L29, and trigger factor when it is bound to the ribosome.

Its function is as follows. One of the early assembly proteins it binds 23S rRNA. One of the proteins that surrounds the polypeptide exit tunnel on the outside of the ribosome. Forms the main docking site for trigger factor binding to the ribosome. The polypeptide is Large ribosomal subunit protein uL23 (Clostridium perfringens (strain SM101 / Type A)).